Consider the following 507-residue polypeptide: Glucose transporter type 3 (507 aa).

Residues 1 to 26 (MRKGGIQDAEPVEPPQSSRKSGTWFA) are disordered. Over 1 to 53 (MRKGGIQDAEPVEPPQSSRKSGTWFAKRPSEMPERHVERAPVRQKINNVGLYK) the chain is Cytoplasmic. Residues 54–74 (ATLYSNIGSFFFGIAVGWSGT) traverse the membrane as a helical segment. The Extracellular segment spans residues 75–95 (AERSVMEQHSYSFQPTELQWS). A helical transmembrane segment spans residues 96–116 (GVCILLTLGAALWCLPMGLMV). Residues 117 to 124 (RLLGCRRT) lie on the Cytoplasmic side of the membrane. Residues 125–145 (ILIQLLPNFLGWFLTVFARSV) form a helical membrane-spanning segment. Topologically, residues 146–152 (PMLYAGR) are extracellular. Residues 153 to 173 (FFLGMCGGAHCVVVPIYNAEI) form a helical membrane-spanning segment. Over 174–183 (STTKKRGAMG) the chain is Cytoplasmic. Residues 184-204 (VVFEGACICGVIYSFAMSLFL) form a helical membrane-spanning segment. Topologically, residues 205 to 207 (ELR) are extracellular. The helical transmembrane segment at 208-228 (IINFVNLGLLALGPLQILMPE) threads the bilayer. At 229-293 (SPAYYVDHGN…YKKVRRSLAR (65 aa)) the chain is on the cytoplasmic side. The chain crosses the membrane as a helical span at residues 294-314 (SLAIALLQKLCGALIFIFYGL). The Extracellular segment spans residues 315 to 324 (NMLDCLRIRR). The chain crosses the membrane as a helical span at residues 325 to 345 (EFGLILCLGLILGFLACFFLV). Residues 346-351 (DRLGRR) are Cytoplasmic-facing. Residues 352–372 (PLLIFSSAGIVFVSIYLGLHF) form a helical membrane-spanning segment. The Extracellular portion of the chain corresponds to 373-374 (KV). A helical membrane pass occupies residues 375-395 (WMTMGLTVMSWIALFCIAIFV). The Cytoplasmic portion of the chain corresponds to 396-420 (GCYTAGVGSLTWVLNAELLVRPMRP). The chain crosses the membrane as a helical span at residues 421–441 (LGCSIVCAFNWLTAFFVICWF). The Extracellular portion of the chain corresponds to 442 to 450 (GSHGVKCQP). Residues 451–471 (YLFLLFAIIASLILLFSLIYI) form a helical membrane-spanning segment. Over 472 to 507 (PETKKLSSAKIQQRLGGLINRPAVITFTSSSDSSNA) the chain is Cytoplasmic.

Belongs to the major facilitator superfamily. Sugar transporter (TC 2.A.1.1) family. Glucose transporter subfamily.

It localises to the cell membrane. Its subcellular location is the perikaryon. The protein localises to the cell projection. Functionally, facilitative glucose transporter that can also mediate the uptake of various other monosaccharides across the cell membrane. In Drosophila melanogaster (Fruit fly), this protein is Glucose transporter type 3 (Glut3).